Consider the following 330-residue polypeptide: 4-hydroxythreonine-4-phosphate dehydrogenase (330 aa).

2 residues coordinate substrate: H133 and T134. The a divalent metal cation site is built by H163, H208, and H263. Positions 271, 280, and 289 each coordinate substrate.

The protein belongs to the PdxA family. As to quaternary structure, homodimer. It depends on Zn(2+) as a cofactor. Requires Mg(2+) as cofactor. The cofactor is Co(2+).

It is found in the cytoplasm. It carries out the reaction 4-(phosphooxy)-L-threonine + NAD(+) = 3-amino-2-oxopropyl phosphate + CO2 + NADH. Its pathway is cofactor biosynthesis; pyridoxine 5'-phosphate biosynthesis; pyridoxine 5'-phosphate from D-erythrose 4-phosphate: step 4/5. Its function is as follows. Catalyzes the NAD(P)-dependent oxidation of 4-(phosphooxy)-L-threonine (HTP) into 2-amino-3-oxo-4-(phosphooxy)butyric acid which spontaneously decarboxylates to form 3-amino-2-oxopropyl phosphate (AHAP). In Azoarcus sp. (strain BH72), this protein is 4-hydroxythreonine-4-phosphate dehydrogenase.